Consider the following 180-residue polypeptide: ATP-dependent protease subunit HslV (180 aa).

Residue Thr5 is part of the active site. Residues Gly165, Cys168, and Thr171 each coordinate Na(+).

This sequence belongs to the peptidase T1B family. HslV subfamily. In terms of assembly, a double ring-shaped homohexamer of HslV is capped on each side by a ring-shaped HslU homohexamer. The assembly of the HslU/HslV complex is dependent on binding of ATP.

It is found in the cytoplasm. The enzyme catalyses ATP-dependent cleavage of peptide bonds with broad specificity.. Allosterically activated by HslU binding. In terms of biological role, protease subunit of a proteasome-like degradation complex believed to be a general protein degrading machinery. This is ATP-dependent protease subunit HslV from Helicobacter hepaticus (strain ATCC 51449 / 3B1).